The primary structure comprises 432 residues: Glutamate-1-semialdehyde 2,1-aminomutase (432 aa).

At K266 the chain carries N6-(pyridoxal phosphate)lysine.

This sequence belongs to the class-III pyridoxal-phosphate-dependent aminotransferase family. HemL subfamily. As to quaternary structure, homodimer. Pyridoxal 5'-phosphate serves as cofactor.

Its subcellular location is the cytoplasm. It catalyses the reaction (S)-4-amino-5-oxopentanoate = 5-aminolevulinate. Its pathway is porphyrin-containing compound metabolism; protoporphyrin-IX biosynthesis; 5-aminolevulinate from L-glutamyl-tRNA(Glu): step 2/2. This Janthinobacterium sp. (strain Marseille) (Minibacterium massiliensis) protein is Glutamate-1-semialdehyde 2,1-aminomutase.